The primary structure comprises 173 residues: MILSGKEILKHIGEDIVIEPFSEERINPNSYNLTLFNELLVYKNETLDMKIPNETEKLIIPEEGLLLEPGKLYLGRTNEFTQTNKYVPMLEGRSSTGRLGLFIHVTAGFGDIGFAGYWTLEIFCVQPIKIYPNTEICQIYYHNIDGEYDLYNSGKYQNNNGIQPSLMYKDFEK.

DCTP is bound by residues Arg93–Arg98, Asp111, Thr119–Glu121, Gln138, and Tyr151. The active-site Proton donor/acceptor is the Glu121.

It belongs to the dCTP deaminase family. As to quaternary structure, homotrimer.

It carries out the reaction dCTP + 2 H2O = dUMP + NH4(+) + diphosphate. Its pathway is pyrimidine metabolism; dUMP biosynthesis; dUMP from dCTP: step 1/1. In terms of biological role, bifunctional enzyme that catalyzes both the deamination of dCTP to dUTP and the hydrolysis of dUTP to dUMP without releasing the toxic dUTP intermediate. The polypeptide is dCTP deaminase, dUMP-forming (Clostridium botulinum (strain Eklund 17B / Type B)).